The following is a 525-amino-acid chain: uncharacterized protein (525 aa).

2 helical membrane-spanning segments follow: residues Phe28–Ile48 and Gly353–Pro373. In terms of domain architecture, Pterin-binding spans Asp146 to Phe394.

It localises to the cell membrane. Its function is as follows. Unknown. Does not possess dihydropteroate synthase (DHPS) activity since it does not catalyze the condensation of 6-hydroxymethyl-7,8-dihydropterin pyrophosphate (DHPP) and 4-aminobenzoate to form 7,8-dihydropteroate. This is an uncharacterized protein from Methanocaldococcus jannaschii (strain ATCC 43067 / DSM 2661 / JAL-1 / JCM 10045 / NBRC 100440) (Methanococcus jannaschii).